A 229-amino-acid chain; its full sequence is Potassium/proton antiporter CemA (229 aa).

The next 3 helical transmembrane spans lie at 7–27 (LTPF…SLSF), 106–126 (LILH…YSIL), and 193–213 (LVST…FLFL).

Belongs to the CemA family.

It is found in the plastid. It localises to the chloroplast inner membrane. It catalyses the reaction K(+)(in) + H(+)(out) = K(+)(out) + H(+)(in). Functionally, contributes to K(+)/H(+) antiport activity by supporting proton efflux to control proton extrusion and homeostasis in chloroplasts in a light-dependent manner to modulate photosynthesis. Prevents excessive induction of non-photochemical quenching (NPQ) under continuous-light conditions. Indirectly promotes efficient inorganic carbon uptake into chloroplasts. In Illicium oligandrum (Star anise), this protein is Potassium/proton antiporter CemA.